Reading from the N-terminus, the 350-residue chain is Putative ATP-binding protein BruAb2_0487 (350 aa).

The 231-residue stretch at 4-234 folds into the ABC transporter domain; that stretch reads VSLRGISKTF…PANKFVAGFI (231 aa). 36–43 contacts ATP; the sequence is GPSGCGKS.

The protein belongs to the ABC transporter superfamily. In terms of assembly, the complex is composed of two ATP-binding proteins (BruAb2_0487), two transmembrane proteins (BruAb2_0483) and a solute-binding protein (BruAb2_0484).

The protein resides in the cell inner membrane. Functionally, probably part of an ABC transporter complex. Probably responsible for energy coupling to the transport system. This is Putative ATP-binding protein BruAb2_0487 from Brucella abortus biovar 1 (strain 9-941).